The chain runs to 595 residues: Isoprene synthase, chloroplastic (595 aa).

The transit peptide at 1–37 (MATELLCLHRPISLTHKLFRNPLPKVIQATPLTLKLR) directs the protein to the chloroplast. Residue D345 participates in dimethylallyl diphosphate binding. Mg(2+) contacts are provided by D345 and D349. Positions 345 to 349 (DDIYD) match the DDXXD motif motif. Positions 423, 486, and 489 each coordinate dimethylallyl diphosphate. The Mg(2+) site is built by N489, S493, and E497.

The protein belongs to the terpene synthase family. Tpsb subfamily. Homodimer. The cofactor is Mg(2+). It depends on Mn(2+) as a cofactor.

It is found in the plastid. Its subcellular location is the chloroplast. It carries out the reaction dimethylallyl diphosphate = isoprene + diphosphate. It participates in secondary metabolite biosynthesis; terpenoid biosynthesis. With respect to regulation, competitive inhibition is mediated by geranyl diphosphate (GPP). Functionally, lyase that catalyzes the formation of isoprene from dimethylallyl diphosphate via a syn-periplanar elimination mechanism in which the diphosphate-leaving group serves as a general base. The chain is Isoprene synthase, chloroplastic from Populus canescens (Grey poplar).